The primary structure comprises 110 residues: Cytochrome c oxidase subunit 4B (110 aa).

A run of 3 helical transmembrane segments spans residues 27–47 (YQVL…LTVA), 50–70 (GVGS…QVIF), and 88–108 (LFLY…VTII).

The protein belongs to the cytochrome c oxidase bacterial subunit 4 family.

The protein resides in the cell membrane. The catalysed reaction is 4 Fe(II)-[cytochrome c] + O2 + 8 H(+)(in) = 4 Fe(III)-[cytochrome c] + 2 H2O + 4 H(+)(out). This Bacillus subtilis (strain 168) protein is Cytochrome c oxidase subunit 4B (ctaF).